Reading from the N-terminus, the 213-residue chain is Pyridoxine/pyridoxamine 5'-phosphate oxidase (213 aa).

FMN is bound by residues 57–62 (RIVLLR), 77–78 (FT), Arg-83, Lys-84, and Gln-106. Arg-62 provides a ligand contact to substrate. Substrate-binding residues include Tyr-124, Arg-128, and Ser-132. The tract at residues 135–163 (GARASDQSRPLPDRKTLQKRVEEEEARYP) is disordered. 141-142 (QS) serves as a coordination point for FMN. Residues 145 to 163 (LPDRKTLQKRVEEEEARYP) show a composition bias toward basic and acidic residues. Trp-186 contributes to the FMN binding site. 192–194 (RLH) contacts substrate. Arg-196 provides a ligand contact to FMN.

The protein belongs to the pyridoxamine 5'-phosphate oxidase family. In terms of assembly, homodimer. FMN serves as cofactor.

The enzyme catalyses pyridoxamine 5'-phosphate + O2 + H2O = pyridoxal 5'-phosphate + H2O2 + NH4(+). It carries out the reaction pyridoxine 5'-phosphate + O2 = pyridoxal 5'-phosphate + H2O2. The protein operates within cofactor metabolism; pyridoxal 5'-phosphate salvage; pyridoxal 5'-phosphate from pyridoxamine 5'-phosphate: step 1/1. It participates in cofactor metabolism; pyridoxal 5'-phosphate salvage; pyridoxal 5'-phosphate from pyridoxine 5'-phosphate: step 1/1. Functionally, catalyzes the oxidation of either pyridoxine 5'-phosphate (PNP) or pyridoxamine 5'-phosphate (PMP) into pyridoxal 5'-phosphate (PLP). The polypeptide is Pyridoxine/pyridoxamine 5'-phosphate oxidase (Granulibacter bethesdensis (strain ATCC BAA-1260 / CGDNIH1)).